We begin with the raw amino-acid sequence, 896 residues long: Sodium/hydrogen exchanger 5 (896 aa).

The Cytoplasmic segment spans residues 1-45; that stretch reads MLRAALSLLALPLAGAAEEPTQKPESPGEPPPGLELFRWQWHEVE. Residues 46-66 traverse the membrane as a helical segment; that stretch reads APYLVALWILVASLAKIVFHL. Residues 67–73 are Extracellular-facing; it reads SRKVTSL. A helical transmembrane segment spans residues 74-94; sequence VPESCLLILLGLVLGGIVLAV. Over 95–103 the chain is Cytoplasmic; the sequence is AKKAEYQLE. Residues 104–124 form a helical membrane-spanning segment; that stretch reads PGTFFLFLLPPIVLDSGYFMP. Topologically, residues 125–134 are extracellular; that stretch reads SRLFFDNLGA. The chain crosses the membrane as a helical span at residues 135-155; the sequence is ILTYAVVGTLWNAFTTGAALW. Residues 156-173 lie on the Cytoplasmic side of the membrane; sequence GLQQAGLVAPRVQAGLLD. Residues 174–194 traverse the membrane as a helical segment; it reads FLLFGSLISAVDPVAVLAVFE. Residues 195-200 lie on the Extracellular side of the membrane; that stretch reads EVHVNE. Residue asparagine 199 is glycosylated (N-linked (GlcNAc...) asparagine). The chain crosses the membrane as a helical span at residues 201 to 221; it reads TLFIIVFGESLLNDAVTVVLY. Topologically, residues 222 to 246 are cytoplasmic; it reads KVCNSFVEMGSANVQATDYLKGVAS. A helical membrane pass occupies residues 247–267; that stretch reads LFVVSLGGAAVGLVFAFLLAL. At 268 to 276 the chain is on the extracellular side; it reads TTRFTKRVR. Residues 277-297 traverse the membrane as a helical segment; sequence IIEPLLVFLLAYAAYLTAEMA. Residues 298–331 are Cytoplasmic-facing; it reads SLSAILAVTMCGLGCKKYVEANISHKSRTTVKYT. A helical transmembrane segment spans residues 332-352; it reads MKTLASCAETVIFMLLGISAV. The Extracellular portion of the chain corresponds to 353–360; the sequence is DSSKWAWD. Residues 361-381 form a helical membrane-spanning segment; that stretch reads SGLVLGTLIFILFFRALGVVL. Topologically, residues 382–398 are cytoplasmic; sequence QTWVLNQFRLVPLDKID. Residues 399-419 traverse the membrane as a helical segment; that stretch reads QVVMSYGGLRGAVAFALVILL. Residues 420-428 lie on the Extracellular side of the membrane; sequence DRTKVPAKD. Residues 429 to 449 traverse the membrane as a helical segment; it reads YFVATTIVVVFFTVIVQGLTI. Residues 450-896 are Cytoplasmic-facing; that stretch reads KPLVKWLKVK…CIQFNRGSRL (447 aa). Residues 576–721 are required for interaction with ARRB2; that stretch reads GSGACLDLQV…SETEKEDDEG (146 aa). Disordered regions lie at residues 658-686, 701-720, and 818-864; these read TKSKPRPRKTGRRKKDGVANAEATNGKHR, ESEEEEEESDSSETEKEDDE, and HPRG…QQQE. Over residues 660–672 the composition is skewed to basic residues; that stretch reads SKPRPRKTGRRKK. Over residues 854 to 864 the composition is skewed to polar residues; sequence ESSADLPQQQE.

The protein belongs to the monovalent cation:proton antiporter 1 (CPA1) transporter (TC 2.A.36) family. In terms of assembly, interacts with CHP1 and CHP2. Interacts with ARRB2; facilitates the endocytosis of SLC9A5 from the plasma membrane. Interacts with RACK1; this interaction positively regulates SLC9A5 activity and promotes SLC9A5 localization to focal adhesions. Interacts with SCAMP2; this interaction regulates SLC9A5 cell-surface targeting and SLC9A5 activity. In terms of processing, phosphorylated by PRKAA2; promotes its accumulation at the cell surface. Phosphorylated by CSNK2A1 in a manner favoring its beta-arrestin binding and endocytosis. Mainly expressed in brain. Expressed in neurons of the central and peripheral nervous system. Expressed also in testis, spleen, and skeletal muscle.

It is found in the cell membrane. Its subcellular location is the recycling endosome membrane. It localises to the cell projection. The protein resides in the dendritic spine membrane. The protein localises to the synaptic cell membrane. It is found in the cell junction. Its subcellular location is the focal adhesion. The enzyme catalyses Na(+)(in) + H(+)(out) = Na(+)(out) + H(+)(in). With respect to regulation, ATP-depletion almost completely abolishes SLC9A5 activity. Inhibited by amiloride compounds. Functionally, plasma membrane Na(+)/H(+) antiporter. Mediates the electroneutral exchange of intracellular H(+) ions for extracellular Na(+) in 1:1 stoichiometry, thus regulating intracellular pH homeostasis, in particular in neural tissues. Acts as a negative regulator of dendritic spine growth. Plays a role in postsynaptic remodeling and signaling. Can also contribute to organellar pH regulation, with consequences for receptor tyrosine kinase trafficking. The chain is Sodium/hydrogen exchanger 5 from Homo sapiens (Human).